A 675-amino-acid polypeptide reads, in one-letter code: Myosin-binding protein 3 (675 aa).

A helical membrane pass occupies residues 17–37; it reads ITVILVYAFLEWLLMFFIFLN. Disordered regions lie at residues 225-274 and 286-315; these read LRSI…EEET and SKNF…TPTS. The segment covering 238-251 has biased composition (basic and acidic residues); that stretch reads AKSRVSEDEQRNDD. Positions 355–453 constitute a GTD-binding domain; sequence RTIERLRETV…QLQRELEVYR (99 aa). Acidic residues predominate over residues 474–496; it reads CEADDDDKEEENREEDNSSEMDV. Disordered stretches follow at residues 474 to 497, 542 to 565, and 582 to 605; these read CEAD…MDVD, DKES…GHGG, and AENE…GSDS. Residues 596-605 are compositionally biased toward basic and acidic residues; that stretch reads SDEKNFGSDS. Residues 605–633 adopt a coiled-coil conformation; sequence SEKLEIIKQVDSVYERLQELETDGEFLKN.

As to quaternary structure, interacts with myosin XI-K.

The protein resides in the membrane. Membrane-anchored myosin receptors that define a distinct, plant-specific transport vesicle compartment. The chain is Myosin-binding protein 3 from Arabidopsis thaliana (Mouse-ear cress).